Consider the following 447-residue polypeptide: N-succinylarginine dihydrolase (447 aa).

Substrate contacts are provided by residues 19 to 28 (AGLSFGNEAS), asparagine 110, and 137 to 138 (HR). Glutamate 174 is an active-site residue. Arginine 212 lines the substrate pocket. Histidine 248 is an active-site residue. Residues aspartate 250 and asparagine 359 each contribute to the substrate site. Cysteine 365 serves as the catalytic Nucleophile.

Belongs to the succinylarginine dihydrolase family. As to quaternary structure, homodimer.

It catalyses the reaction N(2)-succinyl-L-arginine + 2 H2O + 2 H(+) = N(2)-succinyl-L-ornithine + 2 NH4(+) + CO2. It functions in the pathway amino-acid degradation; L-arginine degradation via AST pathway; L-glutamate and succinate from L-arginine: step 2/5. Functionally, catalyzes the hydrolysis of N(2)-succinylarginine into N(2)-succinylornithine, ammonia and CO(2). The chain is N-succinylarginine dihydrolase from Salmonella agona (strain SL483).